A 361-amino-acid polypeptide reads, in one-letter code: Chorismate synthase (361 aa).

NADP(+) contacts are provided by R48 and R54. FMN is bound by residues 131 to 133 (RSS), 243 to 244 (NA), G287, 302 to 306 (KPTSS), and R328.

The protein belongs to the chorismate synthase family. In terms of assembly, homotetramer. It depends on FMNH2 as a cofactor.

The enzyme catalyses 5-O-(1-carboxyvinyl)-3-phosphoshikimate = chorismate + phosphate. It participates in metabolic intermediate biosynthesis; chorismate biosynthesis; chorismate from D-erythrose 4-phosphate and phosphoenolpyruvate: step 7/7. Functionally, catalyzes the anti-1,4-elimination of the C-3 phosphate and the C-6 proR hydrogen from 5-enolpyruvylshikimate-3-phosphate (EPSP) to yield chorismate, which is the branch point compound that serves as the starting substrate for the three terminal pathways of aromatic amino acid biosynthesis. This reaction introduces a second double bond into the aromatic ring system. In Rhodopseudomonas palustris (strain BisB5), this protein is Chorismate synthase.